Reading from the N-terminus, the 363-residue chain is Chorismate synthase (363 aa).

A disordered region spans residues 44-63 (DLDRRKPGTSRHTTQRQEPD). The NADP(+) site is built by Arg-48 and Arg-54. FMN contacts are provided by residues 125 to 127 (RSS), 237 to 238 (NA), Gly-277, 292 to 296 (KPTSS), and Arg-318.

This sequence belongs to the chorismate synthase family. In terms of assembly, homotetramer. It depends on FMNH2 as a cofactor.

It catalyses the reaction 5-O-(1-carboxyvinyl)-3-phosphoshikimate = chorismate + phosphate. Its pathway is metabolic intermediate biosynthesis; chorismate biosynthesis; chorismate from D-erythrose 4-phosphate and phosphoenolpyruvate: step 7/7. Its function is as follows. Catalyzes the anti-1,4-elimination of the C-3 phosphate and the C-6 proR hydrogen from 5-enolpyruvylshikimate-3-phosphate (EPSP) to yield chorismate, which is the branch point compound that serves as the starting substrate for the three terminal pathways of aromatic amino acid biosynthesis. This reaction introduces a second double bond into the aromatic ring system. The protein is Chorismate synthase of Pseudomonas fluorescens (strain ATCC BAA-477 / NRRL B-23932 / Pf-5).